Reading from the N-terminus, the 84-residue chain is Toxin To7 (84 aa).

Residues 1–20 (MSIFPIVLALLLIGLEETEA) form the signal peptide. The LCN-type CS-alpha/beta domain maps to 21–83 (LDGYPLSKIN…KMYPGSSPCY (63 aa)). 4 cysteine pairs are disulfide-bonded: C32–C82, C36–C59, C42–C64, and C46–C66.

As to expression, expressed by the venom gland.

Its subcellular location is the secreted. In terms of biological role, inhibits voltage-gated sodium channels (Nav). The sequence is that of Toxin To7 from Tityus obscurus (Amazonian scorpion).